The chain runs to 211 residues: GTP pyrophosphokinase YjbM (211 aa).

Guanosine 3'-diphosphate 5'-triphosphate is bound by residues 21–28, 41–42, and 46–48; these read KVKLKGIR, EF, and RVK. ATP-binding positions include 46 to 48, Ser-52, 56 to 59, Asp-72, and Arg-77; these read RVK and KARR. Arg-59 lines the guanosine 3'-diphosphate 5'-triphosphate pocket. Asp-72 is a Mg(2+) binding site. Guanosine 3'-diphosphate 5'-triphosphate is bound by residues Arg-105, 112-114, and His-120; that span reads KES. The active-site Proton acceptor is the Glu-139. Guanosine 3'-diphosphate 5'-triphosphate is bound by residues Asn-148 and 151–155; that span reads ATIEH.

The protein belongs to the RelA/SpoT family. In terms of assembly, homotetramer.

The catalysed reaction is GTP + ATP = guanosine 3'-diphosphate 5'-triphosphate + AMP. The enzyme catalyses GDP + ATP = guanosine 3',5'-bis(diphosphate) + AMP. The protein operates within purine metabolism; ppGpp biosynthesis; ppGpp from GTP: step 1/2. With respect to regulation, allosterically regulated by its own products; pppGpp simulates synthesis 10-fold more than ppGpp. 2 pppGpp molecules bind in a regulatory cleft in the middle of the tetramer in an asymmetric manner. There is a specific contact of Lys-25 to the gamma-phosphate of pppGpp, explaining why pppGpp stimulates activity but ppGpp does not. Functions as a (p)ppGpp synthase; GDP can be used instead of GTP, resulting in an increase of (p)ppGpp synthesis. The enzyme binds ATP, then GDP or GTP and catalysis is highly cooperative. In eubacteria ppGpp (guanosine 3'-diphosphate 5'-diphosphate) is a mediator of the stringent response that coordinates a variety of cellular activities in response to changes in nutritional abundance. Probably has a minor role in the stringent response. The protein is GTP pyrophosphokinase YjbM (yjbM) of Bacillus subtilis (strain 168).